Here is a 930-residue protein sequence, read N- to C-terminus: Type I restriction enzyme SsaAORF53P endonuclease subunit (930 aa).

Residues 254-418 enclose the Helicase ATP-binding domain; the sequence is HQATETSNNG…DGRSTADIFG (165 aa). 268–274 contacts ATP; that stretch reads TTGSGKT.

The protein belongs to the HsdR family. In terms of assembly, the type I restriction/modification system is composed of three polypeptides R, M and S.

It carries out the reaction Endonucleolytic cleavage of DNA to give random double-stranded fragments with terminal 5'-phosphates, ATP is simultaneously hydrolyzed.. The restriction (R) subunit of a type I restriction enzyme that recognizes an undetermined sequence and cleaves a random distance away. Subunit R is required for both nuclease and ATPase activities, but not for modification. After locating a non-methylated recognition site, the enzyme complex serves as a molecular motor that translocates DNA in an ATP-dependent manner until a collision occurs that triggers cleavage. This chain is Type I restriction enzyme SsaAORF53P endonuclease subunit, found in Staphylococcus saprophyticus subsp. saprophyticus (strain ATCC 15305 / DSM 20229 / NCIMB 8711 / NCTC 7292 / S-41).